The following is a 560-amino-acid chain: Zorya protein ZorC (560 aa).

Component of antiviral defense system Zorya type I, composed of ZorA, ZorB, ZorC and ZorD. Expression of Zorya type I in E.coli (strain MG1655) confers 10,000-fold resistance to phage SECphi27, 100-fold resistance to lambda, and 10-fold resistance to T7. While most T7 infected Zorya-containing cells undergo abortive infection, a minority produce viable phage progeny. These eventually accumulate to a high multiplicity of infection, leading to culture collapse by 2 hours after initial infection. ZorA and ZorB probably assemble in the cell inner membrane and exert their effect there. The protein is Zorya protein ZorC of Escherichia coli O139:H28 (strain E24377A / ETEC).